We begin with the raw amino-acid sequence, 447 residues long: Glutamate--tRNA ligase 2 (447 aa).

Positions 8–18 match the 'HIGH' region motif; sequence PSPTGYLHVGN. A 'KMSKS' region motif is present at residues 239–243; it reads KLSKR. Lysine 242 is an ATP binding site.

The protein belongs to the class-I aminoacyl-tRNA synthetase family. Glutamate--tRNA ligase type 1 subfamily. Monomer.

The protein resides in the cytoplasm. It carries out the reaction tRNA(Glu) + L-glutamate + ATP = L-glutamyl-tRNA(Glu) + AMP + diphosphate. In terms of biological role, catalyzes the attachment of glutamate to tRNA(Glu) in a two-step reaction: glutamate is first activated by ATP to form Glu-AMP and then transferred to the acceptor end of tRNA(Glu). The polypeptide is Glutamate--tRNA ligase 2 (Granulibacter bethesdensis (strain ATCC BAA-1260 / CGDNIH1)).